We begin with the raw amino-acid sequence, 101 residues long: Small ribosomal subunit protein uS14 (101 aa).

It belongs to the universal ribosomal protein uS14 family. Part of the 30S ribosomal subunit. Contacts proteins S3 and S10.

In terms of biological role, binds 16S rRNA, required for the assembly of 30S particles and may also be responsible for determining the conformation of the 16S rRNA at the A site. This Burkholderia mallei (strain NCTC 10247) protein is Small ribosomal subunit protein uS14.